Here is a 253-residue protein sequence, read N- to C-terminus: MSGHSKWATTKHKKAVVDAKRAKSFARLIKNIEVAARTGGGDVSGNPTLFDAIQKAKKTSVPADNIDRAVKRGSGAEAGGADWQTIMYEGYGPNGVALLVECLTDNKNRAAMEVRTAMTRNGGSLADPGSVAYMFSRKGVVVIGKEGTDLTEDDVLGAVLDAGAEEVSDQGDTFEVISEATDLAAVRDALKAAGIEYDSAEASFVPSVEVPLDAEGATKVFRLIDALDDCDDVQNVFANYDVSDDVMAALEDA.

The protein belongs to the TACO1 family.

The protein resides in the cytoplasm. The polypeptide is Probable transcriptional regulatory protein Krad_3057 (Kineococcus radiotolerans (strain ATCC BAA-149 / DSM 14245 / SRS30216)).